The sequence spans 373 residues: tRNA-specific 2-thiouridylase MnmA (373 aa).

ATP contacts are provided by residues Gly-12–Ser-19 and Met-38. Residues Asn-98–Asp-100 are interaction with target base in tRNA. The active-site Nucleophile is the Cys-103. Cys-103 and Cys-200 are joined by a disulfide. Gly-127 provides a ligand contact to ATP. Positions Lys-150 to Gln-152 are interaction with tRNA. Cys-200 acts as the Cysteine persulfide intermediate in catalysis. The segment at Arg-312–Tyr-313 is interaction with tRNA.

It belongs to the MnmA/TRMU family.

It is found in the cytoplasm. The catalysed reaction is S-sulfanyl-L-cysteinyl-[protein] + uridine(34) in tRNA + AH2 + ATP = 2-thiouridine(34) in tRNA + L-cysteinyl-[protein] + A + AMP + diphosphate + H(+). Functionally, catalyzes the 2-thiolation of uridine at the wobble position (U34) of tRNA, leading to the formation of s(2)U34. This Streptococcus pyogenes serotype M1 protein is tRNA-specific 2-thiouridylase MnmA.